Here is a 175-residue protein sequence, read N- to C-terminus: D-glycero-beta-D-manno-heptose-1,7-bisphosphate 7-phosphatase (175 aa).

Catalysis depends on D7, which acts as the Nucleophile. Residues D7 and D9 each contribute to the Mg(2+) site. Residues 7–9 (DRD), 15–19 (DSDAY), and 50–53 (TNQS) each bind substrate. The active-site Proton donor is D9. 4 residues coordinate Zn(2+): C89, H91, C97, and C99. Residue 100 to 101 (RK) coordinates substrate. D126 is a binding site for Mg(2+).

This sequence belongs to the gmhB family. In terms of assembly, monomer. It depends on Mg(2+) as a cofactor. Zn(2+) serves as cofactor.

The protein localises to the cytoplasm. The enzyme catalyses D-glycero-beta-D-manno-heptose 1,7-bisphosphate + H2O = D-glycero-beta-D-manno-heptose 1-phosphate + phosphate. It functions in the pathway nucleotide-sugar biosynthesis; ADP-L-glycero-beta-D-manno-heptose biosynthesis; ADP-L-glycero-beta-D-manno-heptose from D-glycero-beta-D-manno-heptose 7-phosphate: step 2/4. Its pathway is bacterial outer membrane biogenesis; LPS core biosynthesis. Converts the D-glycero-beta-D-manno-heptose 1,7-bisphosphate (beta-HBP) intermediate into D-glycero-beta-D-manno-heptose 1-phosphate by removing the phosphate group at the C-7 position. In Pseudomonas putida (strain ATCC 47054 / DSM 6125 / CFBP 8728 / NCIMB 11950 / KT2440), this protein is D-glycero-beta-D-manno-heptose-1,7-bisphosphate 7-phosphatase.